The chain runs to 131 residues: Global transcriptional regulator Spx (131 aa).

Cysteine 10 and cysteine 13 are joined by a disulfide.

It belongs to the ArsC family. Spx subfamily. Interacts with the C-terminal domain of the alpha subunit of the RNAP.

It is found in the cytoplasm. In terms of biological role, global transcriptional regulator that plays a key role in stress response and exerts either positive or negative regulation of genes. Acts by interacting with the C-terminal domain of the alpha subunit of the RNA polymerase (RNAP). This interaction can enhance binding of RNAP to the promoter region of target genes and stimulate their transcription, or block interaction of RNAP with activator. In Staphylococcus saprophyticus subsp. saprophyticus (strain ATCC 15305 / DSM 20229 / NCIMB 8711 / NCTC 7292 / S-41), this protein is Global transcriptional regulator Spx.